A 325-amino-acid chain; its full sequence is Quinone oxidoreductase (325 aa).

This sequence belongs to the zinc-containing alcohol dehydrogenase family. Quinone oxidoreductase subfamily.

The catalysed reaction is 2 a quinone + NADPH + H(+) = 2 a 1,4-benzosemiquinone + NADP(+). In Pseudomonas aeruginosa (strain ATCC 15692 / DSM 22644 / CIP 104116 / JCM 14847 / LMG 12228 / 1C / PRS 101 / PAO1), this protein is Quinone oxidoreductase (qor).